A 205-amino-acid chain; its full sequence is Small ribosomal subunit protein uS4 (205 aa).

The interval 18-46 (NIWGRPKSPVNRREYGPGQHGQRRKGKLS) is disordered. Residues 94-157 (RRLDTVVYRS…KQLAIVLEAN (64 aa)) form the S4 RNA-binding domain.

It belongs to the universal ribosomal protein uS4 family. As to quaternary structure, part of the 30S ribosomal subunit. Contacts protein S5. The interaction surface between S4 and S5 is involved in control of translational fidelity.

In terms of biological role, one of the primary rRNA binding proteins, it binds directly to 16S rRNA where it nucleates assembly of the body of the 30S subunit. Its function is as follows. With S5 and S12 plays an important role in translational accuracy. The polypeptide is Small ribosomal subunit protein uS4 (Rhodopseudomonas palustris (strain BisB5)).